We begin with the raw amino-acid sequence, 470 residues long: MMAAMATARVRMGPRCAQALWRMPWLPVFLSLAAAAAAAAAEQQVPLVLWSSDRDLWAPAADTHEGHITSDLQLSTYLDPALELGPRNVLLFLQDKLSIEDFTAYGGVFGNKQDSAFSNLENALDLAPSSLVLPAVDWYAVSTLTTYLQEKLGASPLHVDLATLRELKLNASLPALLLIRLPYTASSGLMAPREVLTGNDEVIGQVLSTLKSEDVPYTAALTAVRPSRVARDVAVVAGGLGRQLLQKQPVSPVIHPPVSYNDTAPRILFWAQNFSVAYKDQWEDLTPLTFGVQELNLTGSFWNDSFARLSLTYERLFGTTVTFKFILANRLYPVSARHWFTMERLEVHSNGSVAYFNASQVTGPSIYSFHCEYVSSLSKKGSLLVARTQPSPWQMMLQDFQIQAFNVMGEQFSYASDCASFFSPGIWMGLLTSLFMLFIFTYGLHMILSLKTMDRFDDHKGPTISLTQIV.

Positions 1–41 (MMAAMATARVRMGPRCAQALWRMPWLPVFLSLAAAAAAAAA) are cleaved as a signal peptide. Positions 42 to 231 (EQQVPLVLWS…TAVRPSRVAR (190 aa)) are excised as a propeptide. The Lumenal portion of the chain corresponds to 42 to 419 (EQQVPLVLWS…EQFSYASDCA (378 aa)). 7 N-linked (GlcNAc...) asparagine glycosylation sites follow: Asn-170, Asn-261, Asn-273, Asn-296, Asn-303, Asn-350, and Asn-357. An intrachain disulfide couples Cys-371 to Cys-418. A helical transmembrane segment spans residues 420–440 (SFFSPGIWMGLLTSLFMLFIF). Residues 441-470 (TYGLHMILSLKTMDRFDDHKGPTISLTQIV) are Cytoplasmic-facing. Ser-465 carries the phosphoserine modification.

Belongs to the vacuolar ATPase subunit S1 family. As to quaternary structure, accessory component of the multisubunit proton-transporting vacuolar (V)-ATPase protein pump. Interacts (via N-terminus) with ATP6AP2 (via N-terminus). Interacts with RNASEK. Interacts with TMEM106B (via C-terminus). Post-translationally, N-glycosylated. As to expression, widely expressed, with highest levels in brain and lowest in liver and duodenum.

Its subcellular location is the endoplasmic reticulum membrane. The protein localises to the endoplasmic reticulum-Golgi intermediate compartment membrane. The protein resides in the cytoplasmic vesicle. It localises to the secretory vesicle. It is found in the synaptic vesicle membrane. Its subcellular location is the clathrin-coated vesicle membrane. Accessory subunit of the proton-transporting vacuolar (V)-ATPase protein pump, which is required for luminal acidification of secretory vesicles. Guides the V-type ATPase into specialized subcellular compartments, such as neuroendocrine regulated secretory vesicles or the ruffled border of the osteoclast, thereby regulating its activity. Involved in membrane trafficking and Ca(2+)-dependent membrane fusion. May play a role in the assembly of the V-type ATPase complex. In aerobic conditions, involved in intracellular iron homeostasis, thus triggering the activity of Fe(2+) prolyl hydroxylase (PHD) enzymes, and leading to HIF1A hydroxylation and subsequent proteasomal degradation. In islets of Langerhans cells, may regulate the acidification of dense-core secretory granules. The sequence is that of V-type proton ATPase subunit S1 (ATP6AP1) from Homo sapiens (Human).